A 621-amino-acid chain; its full sequence is Chaperone protein HscA homolog (621 aa).

It belongs to the heat shock protein 70 family.

Its function is as follows. Chaperone involved in the maturation of iron-sulfur cluster-containing proteins. Has a low intrinsic ATPase activity which is markedly stimulated by HscB. This is Chaperone protein HscA homolog from Ralstonia nicotianae (strain ATCC BAA-1114 / GMI1000) (Ralstonia solanacearum).